The sequence spans 428 residues: Immunoglobulin superfamily containing leucine-rich repeat protein (428 aa).

An N-terminal signal peptide occupies residues 1–18 (MQELHLLWWALLLGLAQA). The 32-residue stretch at 19–50 (CPEPCDCGEKYGFQIADCAYRDLEAVPPGFPA) folds into the LRRNT domain. N-linked (GlcNAc...) asparagine glycosylation occurs at N51. 5 LRR repeats span residues 51–72 (NVTA…AFRE), 75–96 (LLQS…ALAS), 99–122 (HLKS…HNLS), 123–144 (ALQL…AFRS), and 147–168 (ALRS…TFTP). The LRRCT domain occupies 180–231 (NPFDCTCGIVWLKTWALATAVSIPEQDNIACTSPHVLKGTPLSRLPPLPCSA). Positions 232–343 (PSVQLSYQPS…GSAESSVDVA (112 aa)) constitute an Ig-like domain. The cysteines at positions 257 and 327 are disulfide-linked. N309 carries an N-linked (GlcNAc...) asparagine glycan.

Its subcellular location is the secreted. This is Immunoglobulin superfamily containing leucine-rich repeat protein (ISLR) from Pongo abelii (Sumatran orangutan).